Reading from the N-terminus, the 34-residue chain is GICACRRRFCLNFEQFSGYCRVNGARYVRCCSRR.

3 cysteine pairs are disulfide-bonded: Cys-3/Cys-31, Cys-5/Cys-20, and Cys-10/Cys-30.

The protein belongs to the alpha-defensin family. As to expression, lung, spleen, small intestine, pituitary gland, adrenal medulla and plasma.

Its subcellular location is the secreted. Functionally, microbicidal activity and inhibits corticotropin (ACTH) stimulated corticosterone production. This Oryctolagus cuniculus (Rabbit) protein is Corticostatin-6.